Here is a 71-residue protein sequence, read N- to C-terminus: Small ribosomal subunit protein bS18 (71 aa).

The protein belongs to the bacterial ribosomal protein bS18 family. As to quaternary structure, part of the 30S ribosomal subunit. Forms a tight heterodimer with protein bS6.

Functionally, binds as a heterodimer with protein bS6 to the central domain of the 16S rRNA, where it helps stabilize the platform of the 30S subunit. The protein is Small ribosomal subunit protein bS18 of Synechocystis sp. (strain ATCC 27184 / PCC 6803 / Kazusa).